The primary structure comprises 448 residues: Dual specificity mitogen-activated protein kinase kinase 5 (448 aa).

Positions 18–25 (VIRIKIPN) are interaction with MAPK7. A PB1 domain is found at 18–109 (VIRIKIPNSG…EPLQIFPRAC (92 aa)). Residues 64 to 68 (DEDGD) are interaction with MAP3K2/MAP3K3. The interval 116 to 144 (NIHGLKVNTRAGPSQHSSPAVSDSLPSNS) is disordered. The interaction with MAPK7 stretch occupies residues 117 to 131 (IHGLKVNTRAGPSQH). The segment covering 126-144 (AGPSQHSSPAVSDSLPSNS) has biased composition (polar residues). The 244-residue stretch at 166–409 (IRYRDTLGHG…MRKQPKERPA (244 aa)) folds into the Protein kinase domain. Residues 172–180 (LGHGNGGTV) and Lys-195 contribute to the ATP site. Asp-283 acts as the Proton acceptor in catalysis. Residue Ser-311 is modified to Phosphoserine. Residue Thr-315 is modified to Phosphothreonine.

It belongs to the protein kinase superfamily. STE Ser/Thr protein kinase family. MAP kinase kinase subfamily. As to quaternary structure, interacts with PARD6A, MAP3K3 and MAPK7. Forms a complex with SQSTM1 and PRKCZ or PRKCI. (Microbial infection) Interacts with Yersinia YopJ. Requires Mg(2+) as cofactor. Activated by phosphorylation on Ser/Thr by MAP kinase kinase kinases. In terms of processing, (Microbial infection) Yersinia YopJ may acetylate Ser/Thr residues, preventing phosphorylation and activation, thus blocking the MAPK signaling pathway. Expressed in many adult tissues. Abundant in heart and skeletal muscle.

It carries out the reaction L-seryl-[protein] + ATP = O-phospho-L-seryl-[protein] + ADP + H(+). The catalysed reaction is L-threonyl-[protein] + ATP = O-phospho-L-threonyl-[protein] + ADP + H(+). The enzyme catalyses L-tyrosyl-[protein] + ATP = O-phospho-L-tyrosyl-[protein] + ADP + H(+). Functionally, acts as a scaffold for the formation of a ternary MAP3K2/MAP3K3-MAP3K5-MAPK7 signaling complex. Activation of this pathway appears to play a critical role in protecting cells from stress-induced apoptosis, neuronal survival and cardiac development and angiogenesis. As part of the MAPK/ERK signaling pathway, acts as a negative regulator of apoptosis in cardiomyocytes via promotion of STUB1/CHIP-mediated ubiquitination and degradation of ICER-type isoforms of CREM. This Homo sapiens (Human) protein is Dual specificity mitogen-activated protein kinase kinase 5 (MAP2K5).